Reading from the N-terminus, the 154-residue chain is Large ribosomal subunit protein uL22c (154 aa).

Belongs to the universal ribosomal protein uL22 family. Part of the 50S ribosomal subunit.

Its subcellular location is the plastid. The protein localises to the chloroplast. This protein binds specifically to 23S rRNA. Its function is as follows. The globular domain of the protein is located near the polypeptide exit tunnel on the outside of the subunit, while an extended beta-hairpin is found that lines the wall of the exit tunnel in the center of the 70S ribosome. The chain is Large ribosomal subunit protein uL22c (rpl22) from Jasminum nudiflorum (Winter jasmine).